We begin with the raw amino-acid sequence, 171 residues long: Transcription factor E (171 aa).

One can recognise an HTH TFE/IIEalpha-type domain in the interval 1–81 (MLNLAKELVG…YWKVNVNQIN (81 aa)).

The protein belongs to the TFE family. As to quaternary structure, monomer. Interaction with RNA polymerase subunits RpoF and RpoE is necessary for Tfe stimulatory transcription activity. Able to interact with Tbp and RNA polymerase in the absence of DNA promoter. Interacts both with the preinitiation and elongation complexes.

Functionally, transcription factor that plays a role in the activation of archaeal genes transcribed by RNA polymerase. Facilitates transcription initiation by enhancing TATA-box recognition by TATA-box-binding protein (Tbp), and transcription factor B (Tfb) and RNA polymerase recruitment. Not absolutely required for transcription in vitro, but particularly important in cases where Tbp or Tfb function is not optimal. It dynamically alters the nucleic acid-binding properties of RNA polymerases by stabilizing the initiation complex and destabilizing elongation complexes. Seems to translocate with the RNA polymerase following initiation and acts by binding to the non template strand of the transcription bubble in elongation complexes. The polypeptide is Transcription factor E (Sulfolobus acidocaldarius (strain ATCC 33909 / DSM 639 / JCM 8929 / NBRC 15157 / NCIMB 11770)).